We begin with the raw amino-acid sequence, 690 residues long: Serotransferrin-1 (690 aa).

The signal sequence occupies residues 1–18; sequence MKLLLLSALLGCLATAYA. Transferrin-like domains are found at residues 25 to 329 and 340 to 669; these read VKWC…SLKK and IKWC…SLRK. The cysteines at positions 28 and 50 are disulfide-linked. The Fe(3+) site is built by D74 and Y104. 3 disulfides stabilise this stretch: C127–C207, C172–C186, and C235–C249. 4 residues coordinate hydrogencarbonate: T129, S134, G136, and W137. N169 is a glycosylation site (N-linked (GlcNAc...) asparagine). Y201 serves as a coordination point for Fe(3+). H257 serves as a coordination point for Fe(3+). 2 disulfide bridges follow: C343–C379 and C353–C370. Residues D394 and Y428 each coordinate Fe(3+). 7 cysteine pairs are disulfide-bonded: C404-C681, C419-C642, C451-C529, C475-C670, C485-C499, C496-C512, and C569-C583. The hydrogencarbonate site is built by T453, R457, A459, and G460. Fe(3+) is bound at residue Y523. H591 provides a ligand contact to Fe(3+).

The protein belongs to the transferrin family. As to quaternary structure, monomer. Abundant in liver and serum with smaller amounts found in the stomach and kidney.

Its subcellular location is the secreted. Functionally, transferrins are iron binding transport proteins which can bind two Fe(3+) ions in association with the binding of an anion, usually bicarbonate. It is responsible for the transport of iron from sites of absorption and heme degradation to those of storage and utilization. Serum transferrin may also have a further role in stimulating cell proliferation. The chain is Serotransferrin-1 (tf1) from Salmo salar (Atlantic salmon).